The sequence spans 1099 residues: SLIT-ROBO Rho GTPase-activating protein 3 (1099 aa).

Residues 19 to 314 form the F-BAR domain; the sequence is AQIKEIRTQL…AVDNLDSRSD (296 aa). Residues 205–225 form a disordered region; it reads HEDRPQRRSSVKKIEKMKEKR. A coiled-coil region spans residues 352–392; the sequence is QTELLMRYHQLQSRLATLKIENEEVRKTLDATMQTLQDMLT. Residues 471–493 form a disordered region; that stretch reads ERAECGTTRPPCLPPKPQKMRRP. The Rho-GAP domain occupies 506–694; the sequence is GSMEAFIKDS…TIIIHHEAIF (189 aa). Positions 744-803 constitute an SH3 domain; it reads VEQIEAIAKFDYMGRSPRELSFKKGASLLLYHRASEDWWEGRHNGVDGLIPHQYIVVQDM. A compositionally biased stretch (polar residues) spans 809-820; that stretch reads DSLSQKADSEAS. Residues 809–847 form a disordered region; the sequence is DSLSQKADSEASSGPLLDDKASSKNDLQSPTEHISDYGF. A phosphoserine mark is found at serine 817, serine 820, serine 821, serine 837, and serine 858. 2 disordered regions span residues 861 to 911 and 926 to 950; these read AAIP…SPEK and PDKKALSEGHSMRSTCGSTRHSSLG. The segment covering 926–936 has biased composition (basic and acidic residues); that stretch reads PDKKALSEGHS. The span at 937–947 shows a compositional bias: polar residues; sequence MRSTCGSTRHS. The stretch at 952–987 forms a coiled coil; the sequence is HKSLEAEALAEDIEKTMSTALHELRELERQNTVKQA. Serine 954 carries the post-translational modification Phosphoserine. The disordered stretch occupies residues 995 to 1099; sequence LEPLKNPPGP…NSSADKSGTM (105 aa). Composition is skewed to low complexity over residues 1026 to 1038 and 1060 to 1074; these read RRSSSSSTEMMTT and VRPVVQHRSSSSSSS. Polar residues predominate over residues 1089 to 1099; the sequence is PNSSADKSGTM.

In terms of assembly, homodimer. Forms a heterooligomer with SRGAP1 and SRGAP2 through its F-BAR domain. Interacts with WASF1. Probably interacts with ROBO1. Interacts with FASLG. As to expression, highly expressed in adult and fetal brain. Expressed at low levels in kidney. Isoform 3 is expressed in the kidney but is absent in the brain.

In terms of biological role, GTPase-activating protein for RAC1 and perhaps Cdc42, but not for RhoA small GTPase. May attenuate RAC1 signaling in neurons. The polypeptide is SLIT-ROBO Rho GTPase-activating protein 3 (SRGAP3) (Homo sapiens (Human)).